The sequence spans 347 residues: Outer membrane protein A (347 aa).

Residues 1 to 21 (MKKQALTIIFLLVSLVTGIQA) form the signal peptide. A run of 8 beta stranded transmembrane segments spans residues 26–36 (HWYLGTKMGWS), 63–74 (APVFGLFLGYEF), 78–86 (FSFEIENDT), 105–116 (NSLQLATKLSYP), 121–129 (FHIYTQLGG), 154–163 (PNVSLGAEYI), 168–175 (FITRLDYT), and 194–202 (DVALSFGWK). Residues 207–218 (NINEIFSSYIPQ) are hinge-like. The OmpA-like domain maps to 220–347 (SDKQYVALNE…RRVEIEVLSD (128 aa)). Cys-321 and Cys-333 are joined by a disulfide.

Belongs to the outer membrane OOP (TC 1.B.6) superfamily. OmpA family. As to quaternary structure, monomer and homodimer.

It is found in the cell outer membrane. Functionally, with TolR probably plays a role in maintaining the position of the peptidoglycan cell wall in the periplasm. Acts as a porin with low permeability that allows slow penetration of small solutes; an internal gate slows down solute passage. This chain is Outer membrane protein A, found in Buchnera aphidicola subsp. Schizaphis graminum (strain Sg).